We begin with the raw amino-acid sequence, 469 residues long: Glutamate--tRNA ligase (469 aa).

The 'HIGH' region signature appears at 9 to 19 (PSPTGFLHVGG). The 'KMSKS' region signature appears at 236-240 (KLSKR). ATP is bound at residue Lys239.

It belongs to the class-I aminoacyl-tRNA synthetase family. Glutamate--tRNA ligase type 1 subfamily. In terms of assembly, monomer.

The protein resides in the cytoplasm. It carries out the reaction tRNA(Glu) + L-glutamate + ATP = L-glutamyl-tRNA(Glu) + AMP + diphosphate. Functionally, catalyzes the attachment of glutamate to tRNA(Glu) in a two-step reaction: glutamate is first activated by ATP to form Glu-AMP and then transferred to the acceptor end of tRNA(Glu). In Shewanella frigidimarina (strain NCIMB 400), this protein is Glutamate--tRNA ligase.